The sequence spans 496 residues: UDP-N-acetylmuramoyl-L-alanyl-D-glutamate--2,6-diaminopimelate ligase (496 aa).

UDP-N-acetyl-alpha-D-muramoyl-L-alanyl-D-glutamate contacts are provided by L24 and S26. ATP is bound at residue 109-115 (GTNGKTS). UDP-N-acetyl-alpha-D-muramoyl-L-alanyl-D-glutamate is bound by residues 151 to 152 (TT), S178, Q184, and R186. An N6-carboxylysine modification is found at K218. Residues R387, 411-414 (DNPR), G462, and E466 each bind meso-2,6-diaminopimelate. The Meso-diaminopimelate recognition motif signature appears at 411 to 414 (DNPR).

It belongs to the MurCDEF family. MurE subfamily. Mg(2+) is required as a cofactor. In terms of processing, carboxylation is probably crucial for Mg(2+) binding and, consequently, for the gamma-phosphate positioning of ATP.

The protein resides in the cytoplasm. The catalysed reaction is UDP-N-acetyl-alpha-D-muramoyl-L-alanyl-D-glutamate + meso-2,6-diaminopimelate + ATP = UDP-N-acetyl-alpha-D-muramoyl-L-alanyl-gamma-D-glutamyl-meso-2,6-diaminopimelate + ADP + phosphate + H(+). Its pathway is cell wall biogenesis; peptidoglycan biosynthesis. In terms of biological role, catalyzes the addition of meso-diaminopimelic acid to the nucleotide precursor UDP-N-acetylmuramoyl-L-alanyl-D-glutamate (UMAG) in the biosynthesis of bacterial cell-wall peptidoglycan. The polypeptide is UDP-N-acetylmuramoyl-L-alanyl-D-glutamate--2,6-diaminopimelate ligase (Pseudomonas putida (strain ATCC 47054 / DSM 6125 / CFBP 8728 / NCIMB 11950 / KT2440)).